Reading from the N-terminus, the 54-residue chain is Large ribosomal subunit protein bL32c (54 aa).

The segment at 1-20 is disordered; sequence MAVPKKKMSKSRRNSRKSNW.

The protein belongs to the bacterial ribosomal protein bL32 family.

Its subcellular location is the plastid. The protein resides in the chloroplast. This is Large ribosomal subunit protein bL32c (rpl32) from Euglena gracilis.